The sequence spans 369 residues: S-(hydroxymethyl)glutathione dehydrogenase (369 aa).

Residues C40, H62, C92, C95, C98, C106, and C169 each contribute to the Zn(2+) site.

Belongs to the zinc-containing alcohol dehydrogenase family. Class-III subfamily. As to quaternary structure, homodimer. Requires Zn(2+) as cofactor.

It is found in the cytoplasm. It carries out the reaction S-(hydroxymethyl)glutathione + NADP(+) = S-formylglutathione + NADPH + H(+). The enzyme catalyses S-(hydroxymethyl)glutathione + NAD(+) = S-formylglutathione + NADH + H(+). The catalysed reaction is a primary alcohol + NAD(+) = an aldehyde + NADH + H(+). It catalyses the reaction a secondary alcohol + NAD(+) = a ketone + NADH + H(+). It carries out the reaction S-nitrosoglutathione + NADH + H(+) = S-(hydroxysulfenamide)glutathione + NAD(+). Has high formaldehyde dehydrogenase activity in the presence of glutathione and catalyzes the oxidation of normal alcohols in a reaction that is not GSH-dependent. In addition, hemithiolacetals other than those formed from GSH, including omega-thiol fatty acids, also are substrates. Also acts as a S-nitroso-glutathione reductase by catalyzing the NADH-dependent reduction of S-nitrosoglutathione. The chain is S-(hydroxymethyl)glutathione dehydrogenase (frmA) from Synechocystis sp. (strain ATCC 27184 / PCC 6803 / Kazusa).